The following is a 475-amino-acid chain: Ribulose bisphosphate carboxylase large chain (475 aa).

A propeptide spanning residues 1–2 is cleaved from the precursor; it reads MS. An N-acetylproline modification is found at Pro3. Lys14 carries the post-translational modification N6,N6,N6-trimethyllysine. 2 residues coordinate substrate: Asn123 and Thr173. Lys175 (proton acceptor) is an active-site residue. Lys177 is a substrate binding site. The Mg(2+) site is built by Lys201, Asp203, and Glu204. The residue at position 201 (Lys201) is an N6-carboxylysine. His294 acts as the Proton acceptor in catalysis. Arg295, His327, and Ser379 together coordinate substrate.

The protein belongs to the RuBisCO large chain family. Type I subfamily. In terms of assembly, heterohexadecamer of 8 large chains and 8 small chains; disulfide-linked. The disulfide link is formed within the large subunit homodimers. It depends on Mg(2+) as a cofactor. In terms of processing, the disulfide bond which can form in the large chain dimeric partners within the hexadecamer appears to be associated with oxidative stress and protein turnover.

The protein resides in the plastid. The protein localises to the chloroplast. The enzyme catalyses 2 (2R)-3-phosphoglycerate + 2 H(+) = D-ribulose 1,5-bisphosphate + CO2 + H2O. It catalyses the reaction D-ribulose 1,5-bisphosphate + O2 = 2-phosphoglycolate + (2R)-3-phosphoglycerate + 2 H(+). Its function is as follows. RuBisCO catalyzes two reactions: the carboxylation of D-ribulose 1,5-bisphosphate, the primary event in carbon dioxide fixation, as well as the oxidative fragmentation of the pentose substrate in the photorespiration process. Both reactions occur simultaneously and in competition at the same active site. The protein is Ribulose bisphosphate carboxylase large chain of Stellaria media (Common chickweed).